A 302-amino-acid polypeptide reads, in one-letter code: Probable WRKY transcription factor 40 (302 aa).

Residues 140–206 constitute a DNA-binding region (WRKY); it reads DTTLVVKDGY…YEGEHNHPMP (67 aa).

The protein belongs to the WRKY group III family.

It localises to the nucleus. In terms of biological role, transcription factor. Interacts specifically with the W box (5'-(T)TGAC[CT]-3'), a frequently occurring elicitor-responsive cis-acting element. This chain is Probable WRKY transcription factor 40, found in Arabidopsis thaliana (Mouse-ear cress).